Consider the following 188-residue polypeptide: Molybdopterin synthase catalytic subunit (188 aa).

Residues 1 to 14 (MTTQPPQDQTSTTP) show a composition bias toward low complexity. A disordered region spans residues 1–23 (MTTQPPQDQTSTTPSLPPHLDPT). Substrate contacts are provided by residues 134–135 (HR), lysine 150, and 157–159 (KRE).

The protein belongs to the MoaE family. MOCS2B subfamily. In terms of assembly, heterotetramer; composed of 2 small (MOCS2A) and 2 large (MOCS2B) subunits.

The protein localises to the cytoplasm. The catalysed reaction is 2 [molybdopterin-synthase sulfur-carrier protein]-C-terminal-Gly-aminoethanethioate + cyclic pyranopterin phosphate + H2O = molybdopterin + 2 [molybdopterin-synthase sulfur-carrier protein]-C-terminal Gly-Gly + 2 H(+). Its pathway is cofactor biosynthesis; molybdopterin biosynthesis. Catalytic subunit of the molybdopterin synthase complex, a complex that catalyzes the conversion of precursor Z into molybdopterin. Acts by mediating the incorporation of 2 sulfur atoms from thiocarboxylated MOCS2A into precursor Z to generate a dithiolene group. This chain is Molybdopterin synthase catalytic subunit, found in Neosartorya fischeri (strain ATCC 1020 / DSM 3700 / CBS 544.65 / FGSC A1164 / JCM 1740 / NRRL 181 / WB 181) (Aspergillus fischerianus).